A 279-amino-acid chain; its full sequence is Monoacylglycerol lipase (279 aa).

Catalysis depends on serine 110, which acts as the Nucleophile. Residues aspartate 226 and histidine 256 each act as charge relay system in the active site.

The protein belongs to the AB hydrolase superfamily. Monomer.

It localises to the secreted. The protein resides in the cell wall. The catalysed reaction is a 1-acylglycerol + H2O = glycerol + a fatty acid + H(+). The enzyme catalyses Hydrolyzes glycerol monoesters of long-chain fatty acids.. It carries out the reaction 1-butyrylglycerol + H2O = butanoate + glycerol + H(+). It catalyses the reaction 1-octanoylglycerol + H2O = octanoate + glycerol + H(+). The catalysed reaction is 1-decanoylglycerol + H2O = decanoate + glycerol + H(+). The enzyme catalyses 1-dodecanoylglycerol + H2O = dodecanoate + glycerol + H(+). It carries out the reaction 1-tetradecanoylglycerol + H2O = tetradecanoate + glycerol + H(+). It catalyses the reaction 1-(9Z-octadecenoyl)-glycerol + H2O = glycerol + (9Z)-octadecenoate + H(+). The catalysed reaction is 2-(9Z-octadecenoyl)-glycerol + H2O = glycerol + (9Z)-octadecenoate + H(+). Inhibited by the serine esterase inhibitors PMSF (100%), E600 (80%) and THL (22%). Virtual screening identified a tautomer of ZINC13451138, known inhibitor for HIV-1 integrase, as a potential inhibitor. Its function is as follows. Involved in the hydrolysis of exogenous host lipids during chronic infection. Catalyzes the hydrolysis of both monoacylglycerols (MAG) and diacylglycerols (DAG), with a preference for MAG. It hydrolyzes 2-MAG, 1-3-MAG and MAG with short, medium and long chain fatty acids such as 1-monobutyroyl-rac-glycerol (MC4), 1-mono-octanoyl-rac-glycerol (MC8), 1-monodecanoyl-rac-glycerol (MC10), 1-monolauroyl-rac-glycerol (MC12), 1-monomyristoyl-rac-glycerol (MC14) and 1-mono-oleyl-rac-glycerol (MC18:1). Also able to hydrolyze DAG with short (DiC6) and medium (DiC10) fatty acid chains, but not with longest fatty acid chains. Can also hydrolyze vinyl laurate (VC12), vinyl butyrate (VC4) and vinyl propionate (VC3). Induces an inflammatory response and cell apoptosis in the host cells. Increases expression of IL-6, NF-kappaB, TLR-2, TLR-6, TNF-alpha, and MyD88 in mouse alveolar macrophage RAW264.7 cells. Persistent expression induces RAW264.7 cell apoptosis in vitro. The polypeptide is Monoacylglycerol lipase (Mycobacterium tuberculosis (strain ATCC 25618 / H37Rv)).